Here is a 206-residue protein sequence, read N- to C-terminus: Glycerol-3-phosphate acyltransferase 1 (206 aa).

5 helical membrane passes run 7–27 (LVIG…KIFL), 54–74 (ILTC…VYFI), 81–101 (DLSF…WNHF), 114–134 (IVFF…FLVI), and 155–175 (WINF…IMIF).

The protein belongs to the PlsY family. Probably interacts with PlsX.

Its subcellular location is the cell membrane. The enzyme catalyses an acyl phosphate + sn-glycerol 3-phosphate = a 1-acyl-sn-glycero-3-phosphate + phosphate. It participates in lipid metabolism; phospholipid metabolism. In terms of biological role, catalyzes the transfer of an acyl group from acyl-phosphate (acyl-PO(4)) to glycerol-3-phosphate (G3P) to form lysophosphatidic acid (LPA). This enzyme utilizes acyl-phosphate as fatty acyl donor, but not acyl-CoA or acyl-ACP. This chain is Glycerol-3-phosphate acyltransferase 1, found in Lactobacillus johnsonii (strain CNCM I-12250 / La1 / NCC 533).